A 175-amino-acid chain; its full sequence is MDRAAKADLVASLNEVFSTTSLVVVAHYKGLTVADMQKLRRQMKQAGATVKVAKNRLANIALDGTNVASIKPLLKGPTLLAYSSDPVAAAKVAVDFAKGNDKLVILGGAMGATALNPDGVKALATLPSLDELRAKIVGLVQAPATKIAQVVNAPAAKLARVFGAYADTANKDEAA.

This sequence belongs to the universal ribosomal protein uL10 family. Part of the ribosomal stalk of the 50S ribosomal subunit. The N-terminus interacts with L11 and the large rRNA to form the base of the stalk. The C-terminus forms an elongated spine to which L12 dimers bind in a sequential fashion forming a multimeric L10(L12)X complex.

Its function is as follows. Forms part of the ribosomal stalk, playing a central role in the interaction of the ribosome with GTP-bound translation factors. In Methylobacterium sp. (strain 4-46), this protein is Large ribosomal subunit protein uL10.